The chain runs to 371 residues: Beta-1,3-galactosyltransferase 4 (371 aa).

The Cytoplasmic segment spans residues 1–4; that stretch reads MPLS. Residues 5–25 traverse the membrane as a helical; Signal-anchor for type II membrane protein segment; that stretch reads LFRRLLLAVLLLVIIWTLFGP. The Lumenal segment spans residues 26–371; that stretch reads SGLGEELLSL…RCRFIAWLNS (346 aa). Asparagine 143 is a glycosylation site (N-linked (GlcNAc...) asparagine). The disordered stretch occupies residues 187 to 208; the sequence is GGPSEQWQKGKEPQEETTAVHK. Residues 194–207 are compositionally biased toward basic and acidic residues; that stretch reads QKGKEPQEETTAVH.

Belongs to the glycosyltransferase 31 family. In terms of tissue distribution, highly expressed in thymus, spleen, kidney and testis and, to a lesser extent, in brain and liver.

It is found in the golgi apparatus membrane. The enzyme catalyses a ganglioside GM2 (d18:1(4E)) + UDP-alpha-D-galactose = a ganglioside GM1 (d18:1(4E)) + UDP + H(+). The catalysed reaction is a ganglioside GM2 + UDP-alpha-D-galactose = a ganglioside GM1 + UDP + H(+). It carries out the reaction a ganglioside GD2 (d18:1(4E)) + UDP-alpha-D-galactose = a ganglioside GD1b (d18:1(4E)) + UDP + H(+). It catalyses the reaction a ganglioside GA2 (d18:1(4E)) + UDP-alpha-D-galactose = a ganglioside GA1 (d18:1(4E)) + UDP + H(+). It functions in the pathway protein modification; protein glycosylation. Involved in GM1/GD1B/GA1 ganglioside biosynthesis. The sequence is that of Beta-1,3-galactosyltransferase 4 (B3galt4) from Rattus norvegicus (Rat).